The chain runs to 568 residues: Alpha-1,3-galactosidase A (568 aa).

Positions 1-17 are cleaved as a signal peptide; that stretch reads MMSVWFIQLAIFAQSRI. PbH1 repeat units lie at residues 87-125, 243-265, 299-321, 409-431, 432-454, and 465-486; these read LYLN…VLKN, SKGI…VCQY, RGMI…NIHG, TPEV…LITT, RRKS…FVAD, and VHDL…ISID.

It belongs to the glycosyl hydrolase 110 family. A subfamily.

It catalyses the reaction Hydrolysis of terminal, non-reducing branched (1-&gt;3)-alpha-D-galactosidic residues, producing free D-galactose.. The enzyme catalyses Hydrolysis of terminal, non-reducing alpha-D-galactose residues in alpha-D-galactosides, including galactose oligosaccharides, galactomannans and galactolipids.. Functionally, alpha-galactosidase that specifically removes branched alpha-1,3-linked galactose residues present in blood group B antigens. Has no activity toward linear alpha-1,3-linked galactose residues. This is Alpha-1,3-galactosidase A (glaA) from Bacteroides thetaiotaomicron (strain ATCC 29148 / DSM 2079 / JCM 5827 / CCUG 10774 / NCTC 10582 / VPI-5482 / E50).